Reading from the N-terminus, the 227-residue chain is GRF-interacting factor 1 (227 aa).

A disordered region spans residues 186-227 (RSGSGAKEGSTSLSVDVRGGTSSGAQSGDGEYLKVGTEEEGS).

This sequence belongs to the SS18 family. As to quaternary structure, interacts with several GRFs. Interacts with GRF10. Interacts with GRF1. As to expression, expressed in shoots, aerial roots, ears and tassels. Expressed in the shoot apical meristem (SAM), young leaf primordia, leaf margins, inflorescence meristem, floral meristem and spikelet meristem.

Its function is as follows. Transcription coactivator that plays a role in the regulation of meristematic function in leaves, stems and inflorescences. Regulates shoot architecture and meristem determinacy. Binds to the inflorescence architecture gene UB3 (unbranched3). Regulates the expression of several genes involved in inflorescence architecture. Component of a network formed by the microRNA396 (miRNA396), the GRFs and their interacting factors (GIFs) acting in the regulation of meristem function, at least partially through the control of cell proliferation. Associates with the core SWI/SNF chromatin-remodeling complex and specific GRFs to tightly regulate the transition between cell division and cell expansion in growing leaves. This Zea mays (Maize) protein is GRF-interacting factor 1.